Here is a 489-residue protein sequence, read N- to C-terminus: 3-octaprenyl-4-hydroxybenzoate carboxy-lyase (489 aa).

Asn172 lines the Mn(2+) pocket. Prenylated FMN contacts are provided by residues 175 to 177, 189 to 191, and 194 to 195; these read IYR, RWL, and RG. Residue Glu238 participates in Mn(2+) binding. Asp287 functions as the Proton donor in the catalytic mechanism.

It belongs to the UbiD family. As to quaternary structure, homohexamer. Requires prenylated FMN as cofactor. Mn(2+) serves as cofactor.

It is found in the cell membrane. It carries out the reaction a 4-hydroxy-3-(all-trans-polyprenyl)benzoate + H(+) = a 2-(all-trans-polyprenyl)phenol + CO2. Its pathway is cofactor biosynthesis; ubiquinone biosynthesis. In terms of biological role, catalyzes the decarboxylation of 3-octaprenyl-4-hydroxy benzoate to 2-octaprenylphenol, an intermediate step in ubiquinone biosynthesis. The sequence is that of 3-octaprenyl-4-hydroxybenzoate carboxy-lyase from Klebsiella pneumoniae (strain 342).